The sequence spans 367 residues: tRNA 2-selenouridine synthase (367 aa).

The Rhodanese domain maps to 14–137 (FLNDVPLMDV…LRRFLIDSLE (124 aa)). The active-site S-selanylcysteine intermediate is cysteine 97.

This sequence belongs to the SelU family. Monomer.

The catalysed reaction is 5-methylaminomethyl-2-thiouridine(34) in tRNA + selenophosphate + (2E)-geranyl diphosphate + H2O + H(+) = 5-methylaminomethyl-2-selenouridine(34) in tRNA + (2E)-thiogeraniol + phosphate + diphosphate. It carries out the reaction 5-methylaminomethyl-2-thiouridine(34) in tRNA + (2E)-geranyl diphosphate = 5-methylaminomethyl-S-(2E)-geranyl-thiouridine(34) in tRNA + diphosphate. It catalyses the reaction 5-methylaminomethyl-S-(2E)-geranyl-thiouridine(34) in tRNA + selenophosphate + H(+) = 5-methylaminomethyl-2-(Se-phospho)selenouridine(34) in tRNA + (2E)-thiogeraniol. The enzyme catalyses 5-methylaminomethyl-2-(Se-phospho)selenouridine(34) in tRNA + H2O = 5-methylaminomethyl-2-selenouridine(34) in tRNA + phosphate. Involved in the post-transcriptional modification of the uridine at the wobble position (U34) of tRNA(Lys), tRNA(Glu) and tRNA(Gln). Catalyzes the conversion of 2-thiouridine (S2U-RNA) to 2-selenouridine (Se2U-RNA). Acts in a two-step process involving geranylation of 2-thiouridine (S2U) to S-geranyl-2-thiouridine (geS2U) and subsequent selenation of the latter derivative to 2-selenouridine (Se2U) in the tRNA chain. In Marinobacter nauticus (strain ATCC 700491 / DSM 11845 / VT8) (Marinobacter aquaeolei), this protein is tRNA 2-selenouridine synthase.